The sequence spans 788 residues: Response regulator SSK1 (788 aa).

A Response regulatory domain is found at Asn-534–Gly-691. Asp-583 carries the 4-aspartylphosphate modification.

Belongs to the SSK1 family.

It localises to the cytoplasm. Functionally, two-domain response regulator protein in the two-component signal transduction system of the HOG1 pathway. Controls high-osmolarity adaptation and fungicide sensitivity via its regulation of the phosphorylation of HOG1. The sequence is that of Response regulator SSK1 from Cochliobolus heterostrophus (strain C5 / ATCC 48332 / race O) (Southern corn leaf blight fungus).